Consider the following 127-residue polypeptide: Glycine cleavage system H protein (127 aa).

The Lipoyl-binding domain occupies 24 to 105 (TALVGITDFA…YEDGWMVKVS (82 aa)). At lysine 65 the chain carries N6-lipoyllysine.

The protein belongs to the GcvH family. The glycine cleavage system is composed of four proteins: P, T, L and H. It depends on (R)-lipoate as a cofactor.

Functionally, the glycine cleavage system catalyzes the degradation of glycine. The H protein shuttles the methylamine group of glycine from the P protein to the T protein. In Prosthecochloris aestuarii (strain DSM 271 / SK 413), this protein is Glycine cleavage system H protein.